We begin with the raw amino-acid sequence, 288 residues long: 4-diphosphocytidyl-2-C-methyl-D-erythritol kinase (288 aa).

K11 is an active-site residue. Position 100–110 (P100–S110) interacts with ATP. D140 is a catalytic residue.

The protein belongs to the GHMP kinase family. IspE subfamily.

The enzyme catalyses 4-CDP-2-C-methyl-D-erythritol + ATP = 4-CDP-2-C-methyl-D-erythritol 2-phosphate + ADP + H(+). It participates in isoprenoid biosynthesis; isopentenyl diphosphate biosynthesis via DXP pathway; isopentenyl diphosphate from 1-deoxy-D-xylulose 5-phosphate: step 3/6. Catalyzes the phosphorylation of the position 2 hydroxy group of 4-diphosphocytidyl-2C-methyl-D-erythritol. The polypeptide is 4-diphosphocytidyl-2-C-methyl-D-erythritol kinase (Wolbachia sp. subsp. Brugia malayi (strain TRS)).